The sequence spans 251 residues: 5'-nucleotidase SurE (251 aa).

Residues aspartate 8, aspartate 9, serine 39, and asparagine 90 each coordinate a divalent metal cation.

It belongs to the SurE nucleotidase family. The cofactor is a divalent metal cation.

It is found in the cytoplasm. It carries out the reaction a ribonucleoside 5'-phosphate + H2O = a ribonucleoside + phosphate. In terms of biological role, nucleotidase that shows phosphatase activity on nucleoside 5'-monophosphates. This chain is 5'-nucleotidase SurE, found in Colwellia psychrerythraea (strain 34H / ATCC BAA-681) (Vibrio psychroerythus).